A 364-amino-acid chain; its full sequence is Sorbitol dehydrogenase (364 aa).

Residue C54 coordinates Zn(2+). Y60 contacts substrate. The Zn(2+) site is built by H79 and E80. E165 is a substrate binding site. NAD(+)-binding positions include I193, D213, R218, 284 to 286 (VGM), and 308 to 310 (VFR). Residues R310 and Y311 each contribute to the substrate site.

This sequence belongs to the zinc-containing alcohol dehydrogenase family. Homotetramer. It depends on Zn(2+) as a cofactor. Mostly expressed in dry seeds and leaves, and, to a lower extent, in roots, stems, flowers and siliques (at protein level).

Its subcellular location is the mitochondrion membrane. The protein resides in the cell membrane. It localises to the cytoplasm. The protein localises to the cytosol. The enzyme catalyses keto-D-fructose + NADH + H(+) = D-sorbitol + NAD(+). It carries out the reaction ribitol + NAD(+) = D-ribulose + NADH + H(+). The catalysed reaction is xylitol + NAD(+) = D-xylulose + NADH + H(+). Functionally, polyol dehydrogenase that catalyzes the NAD(+)-dependent oxidation of various sugar alcohols. Is mostly active with D-sorbitol (D-glucitol), ribitol and xylitol as substrates, leading to the C2-oxidized products D-fructose, D-ribulose and D-xylulose, respectively. To a lesser extent, can also oxidize arabitol, mannitol, lactitol and maltitol in vitro. Is required for sorbitol metabolism. Cannot use NADP(+) as the electron acceptor. The sequence is that of Sorbitol dehydrogenase (SDH) from Arabidopsis thaliana (Mouse-ear cress).